A 303-amino-acid polypeptide reads, in one-letter code: Bifunctional protein FolD (303 aa).

NADP(+) contacts are provided by residues 165-167, Ser-190, and Ile-231; that span reads GRS.

This sequence belongs to the tetrahydrofolate dehydrogenase/cyclohydrolase family. In terms of assembly, homodimer.

The catalysed reaction is (6R)-5,10-methylene-5,6,7,8-tetrahydrofolate + NADP(+) = (6R)-5,10-methenyltetrahydrofolate + NADPH. It catalyses the reaction (6R)-5,10-methenyltetrahydrofolate + H2O = (6R)-10-formyltetrahydrofolate + H(+). The protein operates within one-carbon metabolism; tetrahydrofolate interconversion. Catalyzes the oxidation of 5,10-methylenetetrahydrofolate to 5,10-methenyltetrahydrofolate and then the hydrolysis of 5,10-methenyltetrahydrofolate to 10-formyltetrahydrofolate. The protein is Bifunctional protein FolD of Prochlorococcus marinus (strain NATL1A).